A 209-amino-acid polypeptide reads, in one-letter code: Imidazole glycerol phosphate synthase subunit HisH (209 aa).

In terms of domain architecture, Glutamine amidotransferase type-1 spans 1–205 (MIAIIDYGMG…KGVVKQWKSS (205 aa)). The active-site Nucleophile is the Cys79. Catalysis depends on residues His180 and Glu182.

As to quaternary structure, heterodimer of HisH and HisF.

The protein localises to the cytoplasm. The catalysed reaction is 5-[(5-phospho-1-deoxy-D-ribulos-1-ylimino)methylamino]-1-(5-phospho-beta-D-ribosyl)imidazole-4-carboxamide + L-glutamine = D-erythro-1-(imidazol-4-yl)glycerol 3-phosphate + 5-amino-1-(5-phospho-beta-D-ribosyl)imidazole-4-carboxamide + L-glutamate + H(+). It catalyses the reaction L-glutamine + H2O = L-glutamate + NH4(+). It functions in the pathway amino-acid biosynthesis; L-histidine biosynthesis; L-histidine from 5-phospho-alpha-D-ribose 1-diphosphate: step 5/9. In terms of biological role, IGPS catalyzes the conversion of PRFAR and glutamine to IGP, AICAR and glutamate. The HisH subunit catalyzes the hydrolysis of glutamine to glutamate and ammonia as part of the synthesis of IGP and AICAR. The resulting ammonia molecule is channeled to the active site of HisF. The polypeptide is Imidazole glycerol phosphate synthase subunit HisH (Bacillus cytotoxicus (strain DSM 22905 / CIP 110041 / 391-98 / NVH 391-98)).